The chain runs to 307 residues: Probable RuBisCO transcriptional regulator (307 aa).

In terms of domain architecture, HTH lysR-type spans phenylalanine 4–threonine 61. Residues phenylalanine 21–lysine 40 constitute a DNA-binding region (H-T-H motif).

Belongs to the LysR transcriptional regulatory family.

Its subcellular location is the plastid. The protein resides in the chloroplast. Its function is as follows. Trans-acting transcriptional regulator of RuBisCO genes (rbcL and rbcS) expression. This chain is Probable RuBisCO transcriptional regulator (rbcR), found in Phaeodactylum tricornutum (strain CCAP 1055/1).